Reading from the N-terminus, the 452-residue chain is Keratin, type II cytoskeletal 80 (452 aa).

Positions 1–82 (MAYRSCVVGF…DPAVQQQKNQ (82 aa)) are head. Ser45 is modified (phosphoserine). Positions 82–118 (QEKEEMKALNDKFASLIGKVQALEQRNQLLETRWSFL) are coil 1A. Residues 83–394 (EKEEMKALND…KLMEGEESRM (312 aa)) enclose the IF rod domain. Residues 119–135 (QGQGSATFDLSHHYETF) form a linker 1 region. The segment at 136–227 (QGRLQEELRK…TVYEQELKDL (92 aa)) is coil 1B. Residues 228 to 251 (TAQVKDVSVTVGLDSRCHIDLSGI) are linker 12. Residues 252-390 (VEEVKAQYDA…ATYHKLMEGE (139 aa)) form a coil 2 region. Residues 391–452 (ESRMDLPSAT…YLSQESEASE (62 aa)) are tail. Positions 412–452 (TASKSGLTKTSSRKKKNRRGPVIKITEMSEKYLSQESEASE) are disordered. A compositionally biased stretch (basic residues) spans 422–432 (SSRKKKNRRGP). Over residues 443-452 (YLSQESEASE) the composition is skewed to polar residues.

The protein belongs to the intermediate filament family. As to quaternary structure, heterotetramer of two type I and two type II keratins.

The protein is Keratin, type II cytoskeletal 80 (Krt80) of Mus musculus (Mouse).